The primary structure comprises 704 residues: Elongation factor G (704 aa).

In terms of domain architecture, tr-type G spans 8–290 (ARYRNIGISA…AVIDYLPSPV (283 aa)). GTP contacts are provided by residues 17 to 24 (AHIDAGKT), 88 to 92 (DTPGH), and 142 to 145 (NKMD).

The protein belongs to the TRAFAC class translation factor GTPase superfamily. Classic translation factor GTPase family. EF-G/EF-2 subfamily.

The protein resides in the cytoplasm. Its function is as follows. Catalyzes the GTP-dependent ribosomal translocation step during translation elongation. During this step, the ribosome changes from the pre-translocational (PRE) to the post-translocational (POST) state as the newly formed A-site-bound peptidyl-tRNA and P-site-bound deacylated tRNA move to the P and E sites, respectively. Catalyzes the coordinated movement of the two tRNA molecules, the mRNA and conformational changes in the ribosome. This chain is Elongation factor G, found in Cronobacter sakazakii (strain ATCC BAA-894) (Enterobacter sakazakii).